We begin with the raw amino-acid sequence, 328 residues long: Probable ABC transporter permease YtrC (328 aa).

The next 8 membrane-spanning stretches (helical) occupy residues 16–36 (VVIL…IVNT), 60–80 (ISNL…CFLG), 110–130 (GFVI…LILV), 144–164 (IGVI…GALT), 167–187 (AFAQ…IIAL), 236–256 (YLLL…FISF), 277–297 (VQIL…YYTG), and 300–320 (IIGY…VSYF).

It belongs to the ABC-5 integral membrane protein family. As to quaternary structure, the complex is composed of 2 ATP-binding proteins (YtrB and YtrE), 2 transmembrane proteins (YtrC and YtrD) and a solute-binding protein (YtrF).

Its subcellular location is the cell membrane. Its function is as follows. Part of the ABC transporter complex YtrBCDEF that plays a role in acetoin utilization during stationary phase and sporulation. The protein is Probable ABC transporter permease YtrC (ytrC) of Bacillus subtilis (strain 168).